The following is a 221-amino-acid chain: Small ribosomal subunit protein uS3 (221 aa).

One can recognise a KH type-2 domain in the interval 39-108 (IRKFVKKRSY…NVIINIVEVK (70 aa)).

The protein belongs to the universal ribosomal protein uS3 family. As to quaternary structure, part of the 30S ribosomal subunit. Forms a tight complex with proteins S10 and S14.

In terms of biological role, binds the lower part of the 30S subunit head. Binds mRNA in the 70S ribosome, positioning it for translation. This is Small ribosomal subunit protein uS3 from Clostridium novyi (strain NT).